A 320-amino-acid polypeptide reads, in one-letter code: MARPKIALIGAGQIGGTLAHLAAIKELGDVVLFDIAEGTPQGKALDIAQSGPSEGFDAVMKGANSYEDIAGADVCIVTAGVPRKPGMSRDDLIGINLKVMKSVGEGIKAHAPNAFVICITNPLDAMVWALQQFSGLPPEKVVGMAGVLDSARFRHFLSVEFNVSMRDVTAFVLGGHGDTMVPLVRYSTVAGIPLPDLVQMGWTSQEKLDQIVQRTRDGGAEIVGLLKTGSAYYAPATSAIEMAEAYLKDQKRLLPCAAWVDGAFGLDGMYVGVPTIIGAGGIEKVVDIKLNADEQAMFDKSVDAVKGLVAACKGIEPSLA.

NAD(+)-binding positions include 10–15 and Asp-34; that span reads GAGQIG. 2 residues coordinate substrate: Arg-83 and Arg-89. Residues Asn-96 and 119-121 each bind NAD(+); that span reads ITN. Residues Asn-121 and Arg-152 each coordinate substrate. His-176 acts as the Proton acceptor in catalysis.

This sequence belongs to the LDH/MDH superfamily. MDH type 3 family.

It carries out the reaction (S)-malate + NAD(+) = oxaloacetate + NADH + H(+). Functionally, catalyzes the reversible oxidation of malate to oxaloacetate. The protein is Malate dehydrogenase of Cereibacter sphaeroides (strain ATCC 17025 / ATH 2.4.3) (Rhodobacter sphaeroides).